The sequence spans 378 residues: UPF0284 protein MK0224 (378 aa).

Belongs to the UPF0284 family.

This chain is UPF0284 protein MK0224, found in Methanopyrus kandleri (strain AV19 / DSM 6324 / JCM 9639 / NBRC 100938).